A 739-amino-acid polypeptide reads, in one-letter code: Pre-mRNA-splicing factor ATP-dependent RNA helicase ddx-15 (739 aa).

The span at 1 to 19 (MSSRHRLDLDGSGRGDRRR) shows a compositional bias: basic and acidic residues. The segment at 1 to 49 (MSSRHRLDLDGSGRGDRRRSPNRRSRSRSRSPHRRSSPDRKRQIGAVGN) is disordered. Over residues 20–35 (SPNRRSRSRSRSPHRR) the composition is skewed to basic residues. Positions 86 to 257 (MELLRNNQCI…FEDCPLLSVP (172 aa)) constitute a Helicase ATP-binding domain. 99-106 (GETGSGKT) provides a ligand contact to ATP. The DEAH box signature appears at 204-207 (DEAH). Residues 282–462 (TVIQIHMVEE…SVVLQLKKLG (181 aa)) enclose the Helicase C-terminal domain.

The protein belongs to the DEAD box helicase family. DEAH subfamily. DDX15/PRP43 sub-subfamily.

The protein localises to the nucleus. It carries out the reaction ATP + H2O = ADP + phosphate + H(+). Pre-mRNA processing factor involved in disassembly of spliceosomes after the release of mature mRNA. The protein is Pre-mRNA-splicing factor ATP-dependent RNA helicase ddx-15 of Caenorhabditis elegans.